The chain runs to 92 residues: UPF0223 protein SP_1404 (92 aa).

It belongs to the UPF0223 family.

The protein is UPF0223 protein SP_1404 of Streptococcus pneumoniae serotype 4 (strain ATCC BAA-334 / TIGR4).